The following is a 144-amino-acid chain: Putative pre-16S rRNA nuclease (144 aa).

This sequence belongs to the YqgF nuclease family.

It localises to the cytoplasm. Its function is as follows. Could be a nuclease involved in processing of the 5'-end of pre-16S rRNA. The chain is Putative pre-16S rRNA nuclease from Lacticaseibacillus casei (strain BL23) (Lactobacillus casei).